Consider the following 258-residue polypeptide: Global transcriptional regulator CodY (258 aa).

Residues 1–156 (MSSLLDKTRM…SATIIGLEIL (156 aa)) are GAF domain. The H-T-H motif DNA-binding region spans 204–223 (ASKIADKVGITRSVIVNALR).

This sequence belongs to the CodY family.

Its subcellular location is the cytoplasm. Its function is as follows. DNA-binding global transcriptional regulator which is involved in the adaptive response to starvation and acts by directly or indirectly controlling the expression of numerous genes in response to nutrient availability. During rapid exponential growth, CodY is highly active and represses genes whose products allow adaptation to nutrient depletion. The polypeptide is Global transcriptional regulator CodY (Clostridium botulinum (strain ATCC 19397 / Type A)).